Consider the following 422-residue polypeptide: Serine--tRNA ligase (422 aa).

229–231 (TAE) provides a ligand contact to L-serine. 260–262 (RKE) is an ATP binding site. Residue Glu-283 participates in L-serine binding. 347–350 (EISS) provides a ligand contact to ATP. Position 383 (Ser-383) interacts with L-serine.

The protein belongs to the class-II aminoacyl-tRNA synthetase family. Type-1 seryl-tRNA synthetase subfamily. In terms of assembly, homodimer. The tRNA molecule binds across the dimer.

It localises to the cytoplasm. The catalysed reaction is tRNA(Ser) + L-serine + ATP = L-seryl-tRNA(Ser) + AMP + diphosphate + H(+). It catalyses the reaction tRNA(Sec) + L-serine + ATP = L-seryl-tRNA(Sec) + AMP + diphosphate + H(+). It participates in aminoacyl-tRNA biosynthesis; selenocysteinyl-tRNA(Sec) biosynthesis; L-seryl-tRNA(Sec) from L-serine and tRNA(Sec): step 1/1. Catalyzes the attachment of serine to tRNA(Ser). Is also able to aminoacylate tRNA(Sec) with serine, to form the misacylated tRNA L-seryl-tRNA(Sec), which will be further converted into selenocysteinyl-tRNA(Sec). The sequence is that of Serine--tRNA ligase from Geobacter sulfurreducens (strain ATCC 51573 / DSM 12127 / PCA).